The sequence spans 1025 residues: Multidrug resistance protein MdtC (1025 aa).

12 helical membrane passes run 3–23 (FFAL…AITL), 333–353 (EVEQ…FLFL), 360–380 (IIPA…MYLC), 387–407 (LSLM…IVVL), 431–451 (VGFT…PLLL), 463–483 (FAVT…TLTP), 528–548 (LVGV…ISIP), 853–873 (VILI…LYES), 875–895 (VHPL…LLAL), 897–917 (LFNA…IGIV), 953–973 (PIMM…LSGG), and 984–1004 (ITIV…TPVV).

This sequence belongs to the resistance-nodulation-cell division (RND) (TC 2.A.6) family. MdtC subfamily. As to quaternary structure, part of a tripartite efflux system composed of MdtA, MdtB and MdtC. MdtC forms a heteromultimer with MdtB.

It localises to the cell inner membrane. This Shigella boydii serotype 4 (strain Sb227) protein is Multidrug resistance protein MdtC.